Consider the following 874-residue polypeptide: Alanine--tRNA ligase (874 aa).

Zn(2+) is bound by residues histidine 564, histidine 568, cysteine 665, and histidine 669.

This sequence belongs to the class-II aminoacyl-tRNA synthetase family. It depends on Zn(2+) as a cofactor.

The protein resides in the cytoplasm. It catalyses the reaction tRNA(Ala) + L-alanine + ATP = L-alanyl-tRNA(Ala) + AMP + diphosphate. Catalyzes the attachment of alanine to tRNA(Ala) in a two-step reaction: alanine is first activated by ATP to form Ala-AMP and then transferred to the acceptor end of tRNA(Ala). Also edits incorrectly charged Ser-tRNA(Ala) and Gly-tRNA(Ala) via its editing domain. This chain is Alanine--tRNA ligase, found in Burkholderia pseudomallei (strain 668).